We begin with the raw amino-acid sequence, 259 residues long: Thiazole synthase (259 aa).

Catalysis depends on lysine 95, which acts as the Schiff-base intermediate with DXP. 1-deoxy-D-xylulose 5-phosphate is bound by residues glycine 156, 183 to 184, and 205 to 206; these read AG and NS.

It belongs to the ThiG family. Homotetramer. Forms heterodimers with either ThiH or ThiS.

The protein localises to the cytoplasm. It carries out the reaction [ThiS sulfur-carrier protein]-C-terminal-Gly-aminoethanethioate + 2-iminoacetate + 1-deoxy-D-xylulose 5-phosphate = [ThiS sulfur-carrier protein]-C-terminal Gly-Gly + 2-[(2R,5Z)-2-carboxy-4-methylthiazol-5(2H)-ylidene]ethyl phosphate + 2 H2O + H(+). Its pathway is cofactor biosynthesis; thiamine diphosphate biosynthesis. Its function is as follows. Catalyzes the rearrangement of 1-deoxy-D-xylulose 5-phosphate (DXP) to produce the thiazole phosphate moiety of thiamine. Sulfur is provided by the thiocarboxylate moiety of the carrier protein ThiS. In vitro, sulfur can be provided by H(2)S. The sequence is that of Thiazole synthase from Coxiella burnetii (strain CbuK_Q154) (Coxiella burnetii (strain Q154)).